The chain runs to 669 residues: DNA mismatch repair protein MutL (669 aa).

The disordered stretch occupies residues E361–G409. Polar residues-rich tracts occupy residues V363–Y384 and T393–T402.

This sequence belongs to the DNA mismatch repair MutL/HexB family.

Its function is as follows. This protein is involved in the repair of mismatches in DNA. It is required for dam-dependent methyl-directed DNA mismatch repair. May act as a 'molecular matchmaker', a protein that promotes the formation of a stable complex between two or more DNA-binding proteins in an ATP-dependent manner without itself being part of a final effector complex. This chain is DNA mismatch repair protein MutL, found in Proteus mirabilis (strain HI4320).